The primary structure comprises 235 residues: 2,3-bisphosphoglycerate-dependent phosphoglycerate mutase (235 aa).

Residues 8–15 (RHGESIWN), 21–22 (TG), arginine 58, 110–113 (ERYY), lysine 121, 137–138 (RR), and 181–182 (GN) each bind substrate. The active-site Tele-phosphohistidine intermediate is histidine 9. Catalysis depends on glutamate 110, which acts as the Proton donor/acceptor.

This sequence belongs to the phosphoglycerate mutase family. BPG-dependent PGAM subfamily.

It catalyses the reaction (2R)-2-phosphoglycerate = (2R)-3-phosphoglycerate. The protein operates within carbohydrate degradation; glycolysis; pyruvate from D-glyceraldehyde 3-phosphate: step 3/5. Catalyzes the interconversion of 2-phosphoglycerate and 3-phosphoglycerate. The polypeptide is 2,3-bisphosphoglycerate-dependent phosphoglycerate mutase (Methanococcus vannielii (strain ATCC 35089 / DSM 1224 / JCM 13029 / OCM 148 / SB)).